We begin with the raw amino-acid sequence, 465 residues long: Ribulose bisphosphate carboxylase large chain (465 aa).

N6,N6,N6-trimethyllysine is present on K4. Substrate contacts are provided by N113 and T163. The active-site Proton acceptor is K165. K167 is a binding site for substrate. 3 residues coordinate Mg(2+): K191, D193, and E194. K191 bears the N6-carboxylysine mark. H284 functions as the Proton acceptor in the catalytic mechanism. The substrate site is built by R285, H317, and S369.

Belongs to the RuBisCO large chain family. Type I subfamily. As to quaternary structure, heterohexadecamer of 8 large chains and 8 small chains; disulfide-linked. The disulfide link is formed within the large subunit homodimers. Mg(2+) is required as a cofactor. In terms of processing, the disulfide bond which can form in the large chain dimeric partners within the hexadecamer appears to be associated with oxidative stress and protein turnover.

Its subcellular location is the plastid. It is found in the chloroplast. It carries out the reaction 2 (2R)-3-phosphoglycerate + 2 H(+) = D-ribulose 1,5-bisphosphate + CO2 + H2O. The catalysed reaction is D-ribulose 1,5-bisphosphate + O2 = 2-phosphoglycolate + (2R)-3-phosphoglycerate + 2 H(+). RuBisCO catalyzes two reactions: the carboxylation of D-ribulose 1,5-bisphosphate, the primary event in carbon dioxide fixation, as well as the oxidative fragmentation of the pentose substrate in the photorespiration process. Both reactions occur simultaneously and in competition at the same active site. In Bauera rubioides (Dog rose), this protein is Ribulose bisphosphate carboxylase large chain.